A 360-amino-acid polypeptide reads, in one-letter code: Chorismate synthase (360 aa).

NADP(+) is bound by residues Arg48 and Arg54. FMN-binding positions include 125–127 (RSS), 242–243 (NG), Gly283, 298–302 (KPTSS), and Arg324.

Belongs to the chorismate synthase family. In terms of assembly, homotetramer. It depends on FMNH2 as a cofactor.

The enzyme catalyses 5-O-(1-carboxyvinyl)-3-phosphoshikimate = chorismate + phosphate. It participates in metabolic intermediate biosynthesis; chorismate biosynthesis; chorismate from D-erythrose 4-phosphate and phosphoenolpyruvate: step 7/7. Catalyzes the anti-1,4-elimination of the C-3 phosphate and the C-6 proR hydrogen from 5-enolpyruvylshikimate-3-phosphate (EPSP) to yield chorismate, which is the branch point compound that serves as the starting substrate for the three terminal pathways of aromatic amino acid biosynthesis. This reaction introduces a second double bond into the aromatic ring system. This Gluconobacter oxydans (strain 621H) (Gluconobacter suboxydans) protein is Chorismate synthase.